Here is a 245-residue protein sequence, read N- to C-terminus: Probable transcriptional regulatory protein MARTH_orf271 (245 aa).

It belongs to the TACO1 family.

The protein resides in the cytoplasm. The sequence is that of Probable transcriptional regulatory protein MARTH_orf271 from Metamycoplasma arthritidis (strain 158L3-1) (Mycoplasma arthritidis).